The sequence spans 525 residues: GMP synthase [glutamine-hydrolyzing] (525 aa).

The region spanning 9–207 (RILILDFGSQ…VRDICQCEAL (199 aa)) is the Glutamine amidotransferase type-1 domain. Cysteine 86 serves as the catalytic Nucleophile. Residues histidine 181 and glutamate 183 contribute to the active site. The region spanning 208–400 (WTPAKIIDDA…LGLPYDMLYR (193 aa)) is the GMPS ATP-PPase domain. 235 to 241 (SGGVDSS) is an ATP binding site.

In terms of assembly, homodimer.

It carries out the reaction XMP + L-glutamine + ATP + H2O = GMP + L-glutamate + AMP + diphosphate + 2 H(+). It functions in the pathway purine metabolism; GMP biosynthesis; GMP from XMP (L-Gln route): step 1/1. In terms of biological role, catalyzes the synthesis of GMP from XMP. This chain is GMP synthase [glutamine-hydrolyzing], found in Escherichia coli O127:H6 (strain E2348/69 / EPEC).